The primary structure comprises 403 residues: Putative F-box/LRR-repeat protein At5g38386 (403 aa).

Residues Met-1 to Phe-47 form the F-box domain. LRR repeat units follow at residues Ile-64 to Cys-91, Gly-93 to Met-119, Val-131 to His-156, Leu-175 to Asp-203, Tyr-243 to Ser-274, and Val-275 to Ala-300.

The polypeptide is Putative F-box/LRR-repeat protein At5g38386 (Arabidopsis thaliana (Mouse-ear cress)).